The sequence spans 557 residues: Calcium-dependent protein kinase 4 (557 aa).

Residues 1 to 72 are disordered; that stretch reads MGNTCRGSIG…LVSPRKASMN (72 aa). Glycine 2 carries N-myristoyl glycine lipidation. Residues 15-27 are compositionally biased toward polar residues; that stretch reads QGYTQPEDSSCST. Residues 28–48 are compositionally biased toward low complexity; it reads NHNPSSGNSYSSSDNFSPTSN. A Protein kinase domain is found at 94 to 352; sequence YTLGRKLGQG…AHEVLCHPWI (259 aa). ATP contacts are provided by residues 100–108 and lysine 123; that span reads LGQGQFGTT. The Proton acceptor role is filled by aspartate 218. The segment at 358–388 is autoinhibitory domain; that stretch reads APDRALDPAVLSRLKQFSAMNKLKKMALRVI. EF-hand domains are found at residues 395–430, 431–466, 467–502, and 506–536; these read EEIA…YGST, LKDT…LNKL, EREE…HNMT, and FEDI…GNPC. Residues aspartate 408, aspartate 410, serine 412, glutamate 419, aspartate 444, aspartate 446, serine 448, threonine 450, glutamate 455, aspartate 480, aspartate 482, serine 484, tyrosine 486, glutamate 491, aspartate 514, aspartate 516, aspartate 518, arginine 520, and glutamate 525 each contribute to the Ca(2+) site.

The protein belongs to the protein kinase superfamily. Ser/Thr protein kinase family. CDPK subfamily.

The protein localises to the membrane. The enzyme catalyses L-seryl-[protein] + ATP = O-phospho-L-seryl-[protein] + ADP + H(+). It catalyses the reaction L-threonyl-[protein] + ATP = O-phospho-L-threonyl-[protein] + ADP + H(+). With respect to regulation, activated by calcium. Autophosphorylation may play an important role in the regulation of the kinase activity. In terms of biological role, regulates the production of reactive oxygen species (ROS) by NADPH oxidase. This is Calcium-dependent protein kinase 4 (CPK4) from Solanum tuberosum (Potato).